Reading from the N-terminus, the 1135-residue chain is Envelopment polyprotein (1135 aa).

The N-terminal stretch at 1-35 (MRILKLLELVVKVSLFTIALSSVLLAFLIFRATDA) is a signal peptide. Topologically, residues 36-314 (KVEIIRGDHP…KYSKSIYKQT (279 aa)) are lumenal. The Cell attachment site signature appears at 41-43 (RGD). Intrachain disulfides connect cysteine 114–cysteine 145 and cysteine 122–cysteine 156. Asparagine 116 is a glycosylation site (N-linked (GlcNAc...) asparagine; by host). Positions 177–195 (LDNKRHFSVGTKFFISESL) are non-covalent dimerization. N-linked (GlcNAc...) asparagine; by host glycosylation occurs at asparagine 210. A disulfide bridge connects residues cysteine 224 and cysteine 285. The chain crosses the membrane as a helical span at residues 315-366 (ACINFSWIRLILIALLIYFPIRWLVNKTTKPLFLWYDLIGLITYPILLLINC). The Cytoplasmic segment spans residues 367-484 (LWKYFPFKCS…VPGCPFLVTS (118 aa)). The signal for signal peptide peptidase stretch occupies residues 437–484 (LSFSLLKFVTEILIGLIILSQMPMSMAQTTQCLSGCFYVPGCPFLVTS). Residues 485 to 1067 (KFEKCPERDQ…YFGSFFDTIR (583 aa)) are Lumenal-facing. Residues asparagine 588, asparagine 605, and asparagine 980 are each glycosylated (N-linked (GlcNAc...) asparagine; by host). Residues 1068-1088 (VILLIAFIFLVIYFCSILTTI) form a helical membrane-spanning segment. Residues 1089-1135 (CKGYVKNESYKSRSKIEDDDDSEIKAPMLMKDTMTRRRPPMDFSHLV) lie on the Cytoplasmic side of the membrane.

Belongs to the tospovirus envelope glycoprotein family. As to quaternary structure, homodimer; disulfide-linked. Heterodimer with Glycoprotein C. Interacts with nucleoprotein. Heterodimer with Glycoprotein N. Interacts with nucleoprotein. Specific enzymatic cleavages in vivo yield mature proteins including Glycoprotein N and Glycoprotein C. Post-translationally, glycosylated with O-linked glycans. Glycosylation is essential for proper subcellular location. In terms of processing, cleaved at acidic pH.

The protein localises to the virion membrane. Its subcellular location is the host Golgi apparatus membrane. The protein resides in the host endoplasmic reticulum membrane. Its function is as follows. Forms the spikes present at the surface of the virion together with Glycoprotein C. They are able to attach the virion to a cell receptor and to promote fusion of membranes after endocytosis of the virion. Plays a role in virus binding and/or entry into the vector midgut. Functionally, forms the spikes present at the surface of the virion together with Glycoprotein N. They are able to attach the virion to a cell receptor and to promote fusion of membranes after endocytosis of the virion. Probable class II fusion protein. This is Envelopment polyprotein (GP) from Tomato spotted wilt virus (strain Regular2A) (TSWV).